The following is a 259-amino-acid chain: Apolipoprotein A-I (259 aa).

An N-terminal signal peptide occupies residues 1–18; it reads MKAAVLAVALVFLTGCQA. 2 consecutive repeat copies span residues 67 to 88 and 89 to 110. Residues 67 to 259 form a 10 X approximate tandem repeats region; that stretch reads LNLLDNWDTL…IDEAKKKLNA (193 aa). Methionine 109 carries the methionine sulfoxide modification. Residues 111–121 form a 3; half-length repeat; the sequence is KDLENVKQKMQ. Repeat 4 spans residues 122–143; that stretch reads PHLDEFQEKWNEEVEAYRQKLE. A 5; truncated repeat occupies 144–161; the sequence is PLGTELHKNAKEMQRHLK. Copy 6 of the repeat occupies 162–183; sequence VVAEEFRDRMRVNADALRAKFG. The stretch at 184 to 203 is one 7; truncated repeat; it reads LYSDQMRENLAQRLTEIKNH. Residue methionine 189 is modified to Methionine sulfoxide. The stretch at 204–225 is repeat 8; it reads PTLIEYHTKASDHLKTLGEKAK. One copy of the 9; half-length repeat lies at 226–236; sequence PALDDLGQGLM. Methionine sulfoxide is present on methionine 236. Residues 237 to 259 form repeat 10; sequence PVLEAWKAKIMSMIDEAKKKLNA.

The protein belongs to the apolipoprotein A1/A4/E family. In terms of assembly, homodimer. Interacts with APOA1BP and CLU. Component of a sperm activating protein complex (SPAP), consisting of APOA1, an immunoglobulin heavy chain, an immunoglobulin light chain and albumin. Interacts with NDRG1. Interacts with SCGB3A2. Interacts with NAXE and YJEFN3. In terms of processing, glycosylated. Post-translationally, palmitoylated. Phosphorylation sites are present in the extracellular medium. Major protein of plasma HDL, also found in chylomicrons.

The protein localises to the secreted. Functionally, participates in the reverse transport of cholesterol from tissues to the liver for excretion by promoting cholesterol efflux from tissues and by acting as a cofactor for the lecithin cholesterol acyltransferase (LCAT). As part of the SPAP complex, activates spermatozoa motility. The chain is Apolipoprotein A-I (Apoa1) from Rattus norvegicus (Rat).